Consider the following 196-residue polypeptide: HTH-type transcriptional regulator BetI (196 aa).

The HTH tetR-type domain maps to Glu-8 to Leu-68. A DNA-binding region (H-T-H motif) is located at residues Thr-31–Phe-50.

It participates in amine and polyamine biosynthesis; betaine biosynthesis via choline pathway [regulation]. In terms of biological role, repressor involved in the biosynthesis of the osmoprotectant glycine betaine. It represses transcription of the choline transporter BetT and the genes of BetAB involved in the synthesis of glycine betaine. This chain is HTH-type transcriptional regulator BetI, found in Paraburkholderia phymatum (strain DSM 17167 / CIP 108236 / LMG 21445 / STM815) (Burkholderia phymatum).